The primary structure comprises 92 residues: Large ribosomal subunit protein bL34m (92 aa).

The N-terminal 46 residues, 1–46 (MALLAGSLLGPTSRSAALLGGRWLQPRAWLGFPDAWGLPTPQQARG), are a transit peptide targeting the mitochondrion. The span at 40-57 (TPQQARGKSRGNEYQPSN) shows a compositional bias: polar residues. The disordered stretch occupies residues 40-63 (TPQQARGKSRGNEYQPSNIKRKNK). A Phosphoserine modification is found at Ser-71.

Belongs to the bacterial ribosomal protein bL34 family. Component of the mitochondrial ribosome large subunit (39S) which comprises a 16S rRNA and about 50 distinct proteins.

The protein localises to the mitochondrion. In Macaca fascicularis (Crab-eating macaque), this protein is Large ribosomal subunit protein bL34m (MRPL34).